Here is a 363-residue protein sequence, read N- to C-terminus: Chorismate synthase (363 aa).

NADP(+) is bound at residue Arg-48. FMN-binding positions include 125 to 127 (RSS), 238 to 239 (NA), Gly-278, 293 to 297 (KPTAS), and Arg-319.

It belongs to the chorismate synthase family. In terms of assembly, homotetramer. It depends on FMNH2 as a cofactor.

It carries out the reaction 5-O-(1-carboxyvinyl)-3-phosphoshikimate = chorismate + phosphate. The protein operates within metabolic intermediate biosynthesis; chorismate biosynthesis; chorismate from D-erythrose 4-phosphate and phosphoenolpyruvate: step 7/7. In terms of biological role, catalyzes the anti-1,4-elimination of the C-3 phosphate and the C-6 proR hydrogen from 5-enolpyruvylshikimate-3-phosphate (EPSP) to yield chorismate, which is the branch point compound that serves as the starting substrate for the three terminal pathways of aromatic amino acid biosynthesis. This reaction introduces a second double bond into the aromatic ring system. The polypeptide is Chorismate synthase (Acinetobacter baumannii (strain ACICU)).